The following is a 493-amino-acid chain: Ketol-acid reductoisomerase (NADP(+)) (493 aa).

The region spanning 15–208 (AQLGKCRFMQ…GGDRAGVLES (194 aa)) is the KARI N-terminal Rossmann domain. Residues 45–48 (CGAQ), Arg-68, Arg-76, Ser-78, and 108–110 (DKQ) contribute to the NADP(+) site. His-132 is an active-site residue. Gly-158 contacts NADP(+). KARI C-terminal knotted domains are found at residues 209–344 (SFVA…NAPA) and 345–486 (FAGK…MKDM). Mg(2+) is bound by residues Asp-217, Glu-221, Glu-389, and Glu-393. Ser-414 serves as a coordination point for substrate.

The protein belongs to the ketol-acid reductoisomerase family. Mg(2+) is required as a cofactor.

The enzyme catalyses (2R)-2,3-dihydroxy-3-methylbutanoate + NADP(+) = (2S)-2-acetolactate + NADPH + H(+). The catalysed reaction is (2R,3R)-2,3-dihydroxy-3-methylpentanoate + NADP(+) = (S)-2-ethyl-2-hydroxy-3-oxobutanoate + NADPH + H(+). The protein operates within amino-acid biosynthesis; L-isoleucine biosynthesis; L-isoleucine from 2-oxobutanoate: step 2/4. Its pathway is amino-acid biosynthesis; L-valine biosynthesis; L-valine from pyruvate: step 2/4. Functionally, involved in the biosynthesis of branched-chain amino acids (BCAA). Catalyzes an alkyl-migration followed by a ketol-acid reduction of (S)-2-acetolactate (S2AL) to yield (R)-2,3-dihydroxy-isovalerate. In the isomerase reaction, S2AL is rearranged via a Mg-dependent methyl migration to produce 3-hydroxy-3-methyl-2-ketobutyrate (HMKB). In the reductase reaction, this 2-ketoacid undergoes a metal-dependent reduction by NADPH to yield (R)-2,3-dihydroxy-isovalerate. The polypeptide is Ketol-acid reductoisomerase (NADP(+)) (Aeromonas hydrophila subsp. hydrophila (strain ATCC 7966 / DSM 30187 / BCRC 13018 / CCUG 14551 / JCM 1027 / KCTC 2358 / NCIMB 9240 / NCTC 8049)).